The primary structure comprises 75 residues: CDC42 small effector protein 2-C (75 aa).

2 S-palmitoyl cysteine lipidation sites follow: C10 and C11. One can recognise a CRIB domain in the interval 29–42 (IGEPMNFVHTAHVG).

Belongs to the CDC42SE/SPEC family.

The protein resides in the cytoplasm. Its subcellular location is the cytoskeleton. The protein localises to the cell membrane. In terms of biological role, probably involved in the organization of the actin cytoskeleton by acting downstream of CDC42, inducing actin filament assembly. The polypeptide is CDC42 small effector protein 2-C (cdc42se2-c) (Xenopus laevis (African clawed frog)).